The following is a 123-amino-acid chain: Small ribosomal subunit protein uS12 (123 aa).

The segment at 1 to 26 (MPTINQLVRKPRKSRSSLNKAPALQH) is disordered. At Asp90 the chain carries 3-methylthioaspartic acid.

It belongs to the universal ribosomal protein uS12 family. Part of the 30S ribosomal subunit. Contacts proteins S8 and S17. May interact with IF1 in the 30S initiation complex.

Functionally, with S4 and S5 plays an important role in translational accuracy. Interacts with and stabilizes bases of the 16S rRNA that are involved in tRNA selection in the A site and with the mRNA backbone. Located at the interface of the 30S and 50S subunits, it traverses the body of the 30S subunit contacting proteins on the other side and probably holding the rRNA structure together. The combined cluster of proteins S8, S12 and S17 appears to hold together the shoulder and platform of the 30S subunit. The protein is Small ribosomal subunit protein uS12 of Ehrlichia chaffeensis (strain ATCC CRL-10679 / Arkansas).